Consider the following 231-residue polypeptide: Casein kinase II subunit beta (231 aa).

The protein belongs to the casein kinase 2 subunit beta family. In terms of assembly, tetramer composed of two alpha chains, one beta chain and one beta' chain. Phosphorylated by alpha subunit.

Regulatory subunit of casein kinase II/CK2. As part of the kinase complex regulates the basal catalytic activity of the alpha subunit a constitutively active serine/threonine-protein kinase that phosphorylates a large number of substrates containing acidic residues C-terminal to the phosphorylated serine or threonine. This Schizosaccharomyces pombe (strain 972 / ATCC 24843) (Fission yeast) protein is Casein kinase II subunit beta.